The sequence spans 161 residues: Disulfide bond formation protein B (161 aa).

The Cytoplasmic segment spans residues 1-8; it reads MQANSRAY. The chain crosses the membrane as a helical span at residues 9–25; sequence FLLIALVSFGLVGVALY. Residues 26–43 lie on the Periplasmic side of the membrane; it reads LQFEKGYQPCPLCVMQRF. A disulfide bridge links Cys35 with Cys38. Residues 44–58 form a helical membrane-spanning segment; that stretch reads AFIGIGIFSLLAAVA. Over 59–63 the chain is Cytoplasmic; the sequence is QNTRS. Residues 64 to 81 form a helical membrane-spanning segment; it reads LWQGLGMLSGIAGIAVAV. The Periplasmic portion of the chain corresponds to 82 to 136; it reads YHVSLLLNPKASCGIDPLENWVNALPTAKALPQVFYADGLCTAPLPPVLGLSVPA. The cysteines at positions 94 and 122 are disulfide-linked. A helical membrane pass occupies residues 137-155; that stretch reads WSLIWLFILTLTLAVGLIR. The Cytoplasmic portion of the chain corresponds to 156–161; it reads REKNFR.

The protein belongs to the DsbB family.

The protein localises to the cell inner membrane. Its function is as follows. Required for disulfide bond formation in some periplasmic proteins. Acts by oxidizing the DsbA protein. This chain is Disulfide bond formation protein B, found in Cupriavidus necator (strain ATCC 17699 / DSM 428 / KCTC 22496 / NCIMB 10442 / H16 / Stanier 337) (Ralstonia eutropha).